The sequence spans 44 residues: EVLLEGPSGVLFKDGQKKYLPPGVKIVLLSKAGAVLSNGDNVQF.

2 tandem repeats follow at residues 3–20 (LLEGPSGVLFKDGQKKYL) and 27–44 (VLLSKAGAVLSNGDNVQF).

Calcified shell.

The polypeptide is Cuticle protein CP463 (Cancer pagurus (Rock crab)).